Consider the following 444-residue polypeptide: Ribosomal protein uS12 methylthiotransferase RimO (444 aa).

Residues 4–118 (IKYGVVSLGC…LSDAIKKSIE (115 aa)) enclose the MTTase N-terminal domain. [4Fe-4S] cluster-binding residues include cysteine 13, cysteine 48, cysteine 81, cysteine 155, cysteine 159, and cysteine 162. The Radical SAM core domain occupies 141–373 (TTQKHYAYLR…MQRDIVKSIN (233 aa)). Residues 374-440 (ADKVNKVYKV…EYDLIGVVCD (67 aa)) enclose the TRAM domain.

The protein belongs to the methylthiotransferase family. RimO subfamily. [4Fe-4S] cluster is required as a cofactor.

It is found in the cytoplasm. It catalyses the reaction L-aspartate(89)-[ribosomal protein uS12]-hydrogen + (sulfur carrier)-SH + AH2 + 2 S-adenosyl-L-methionine = 3-methylsulfanyl-L-aspartate(89)-[ribosomal protein uS12]-hydrogen + (sulfur carrier)-H + 5'-deoxyadenosine + L-methionine + A + S-adenosyl-L-homocysteine + 2 H(+). Catalyzes the methylthiolation of an aspartic acid residue of ribosomal protein uS12. The sequence is that of Ribosomal protein uS12 methylthiotransferase RimO from Clostridium tetani (strain Massachusetts / E88).